Consider the following 329-residue polypeptide: GTP 3',8-cyclase (329 aa).

In terms of domain architecture, Radical SAM core spans Met1–Ala229. Arg8 serves as a coordination point for GTP. Positions 15 and 19 each coordinate [4Fe-4S] cluster. S-adenosyl-L-methionine is bound at residue Tyr21. A [4Fe-4S] cluster-binding site is contributed by Cys22. Residue Arg60 coordinates GTP. S-adenosyl-L-methionine is bound at residue Gly64. GTP is bound at residue Thr91. S-adenosyl-L-methionine is bound at residue Ser115. Position 155 (Lys155) interacts with GTP. Met189 is a binding site for S-adenosyl-L-methionine. Residues Cys252 and Cys255 each coordinate [4Fe-4S] cluster. Arg257–Arg259 is a binding site for GTP. Residue Cys269 coordinates [4Fe-4S] cluster.

This sequence belongs to the radical SAM superfamily. MoaA family. As to quaternary structure, monomer and homodimer. [4Fe-4S] cluster serves as cofactor.

It catalyses the reaction GTP + AH2 + S-adenosyl-L-methionine = (8S)-3',8-cyclo-7,8-dihydroguanosine 5'-triphosphate + 5'-deoxyadenosine + L-methionine + A + H(+). It functions in the pathway cofactor biosynthesis; molybdopterin biosynthesis. Functionally, catalyzes the cyclization of GTP to (8S)-3',8-cyclo-7,8-dihydroguanosine 5'-triphosphate. The protein is GTP 3',8-cyclase of Cyanothece sp. (strain PCC 7425 / ATCC 29141).